Consider the following 102-residue polypeptide: Large ribosomal subunit protein uL24 (102 aa).

This sequence belongs to the universal ribosomal protein uL24 family. In terms of assembly, part of the 50S ribosomal subunit.

In terms of biological role, one of two assembly initiator proteins, it binds directly to the 5'-end of the 23S rRNA, where it nucleates assembly of the 50S subunit. One of the proteins that surrounds the polypeptide exit tunnel on the outside of the subunit. This is Large ribosomal subunit protein uL24 from Cupriavidus necator (strain ATCC 17699 / DSM 428 / KCTC 22496 / NCIMB 10442 / H16 / Stanier 337) (Ralstonia eutropha).